The sequence spans 163 residues: Putative pre-16S rRNA nuclease (163 aa).

It belongs to the YqgF nuclease family.

The protein localises to the cytoplasm. Functionally, could be a nuclease involved in processing of the 5'-end of pre-16S rRNA. The polypeptide is Putative pre-16S rRNA nuclease (Nitrobacter hamburgensis (strain DSM 10229 / NCIMB 13809 / X14)).